The following is a 647-amino-acid chain: Chaperone protein DnaK (647 aa).

The residue at position 198 (threonine 198) is a Phosphothreonine; by autocatalysis. The interval 603–647 (EQAQGAGGAQGFDPNAFQGGDAGQQQKADDGVVDAEFTEVKDDKK) is disordered. Positions 618-628 (AFQGGDAGQQQ) are enriched in low complexity.

It belongs to the heat shock protein 70 family.

Functionally, acts as a chaperone. The chain is Chaperone protein DnaK from Acinetobacter baylyi (strain ATCC 33305 / BD413 / ADP1).